Here is a 342-residue protein sequence, read N- to C-terminus: Ferrochelatase (342 aa).

Fe cation contacts are provided by His-188 and Glu-268.

This sequence belongs to the ferrochelatase family.

The protein localises to the cytoplasm. The catalysed reaction is heme b + 2 H(+) = protoporphyrin IX + Fe(2+). It functions in the pathway porphyrin-containing compound metabolism; protoheme biosynthesis; protoheme from protoporphyrin-IX: step 1/1. Functionally, catalyzes the ferrous insertion into protoporphyrin IX. The polypeptide is Ferrochelatase (Rickettsia conorii (strain ATCC VR-613 / Malish 7)).